The following is a 517-amino-acid chain: UDP-N-acetylmuramyl-tripeptide synthetase (517 aa).

Residue serine 38 coordinates UDP-N-acetyl-alpha-D-muramoyl-L-alanyl-D-glutamate. 116–122 provides a ligand contact to ATP; sequence GTKGKTT. UDP-N-acetyl-alpha-D-muramoyl-L-alanyl-D-glutamate contacts are provided by residues asparagine 160, 162–163, serine 189, and arginine 197; that span reads TT. Lysine 231 bears the N6-carboxylysine mark.

This sequence belongs to the MurCDEF family. MurE subfamily. Post-translationally, carboxylation is probably crucial for Mg(2+) binding and, consequently, for the gamma-phosphate positioning of ATP.

Its subcellular location is the cytoplasm. It participates in cell wall biogenesis; peptidoglycan biosynthesis. Catalyzes the addition of an amino acid to the nucleotide precursor UDP-N-acetylmuramoyl-L-alanyl-D-glutamate (UMAG) in the biosynthesis of bacterial cell-wall peptidoglycan. This Lacticaseibacillus paracasei (strain ATCC 334 / BCRC 17002 / CCUG 31169 / CIP 107868 / KCTC 3260 / NRRL B-441) (Lactobacillus paracasei) protein is UDP-N-acetylmuramyl-tripeptide synthetase.